Here is a 105-residue protein sequence, read N- to C-terminus: MDDSEFNALAEQALARIDAALEACDADLDFELAPGGVLEIEFADRSKIIVNRHSIAKEIWVAARAGGFHFRWDGASWRDTRDNAELMEKLSTLASQQAGEAIVLR.

This sequence belongs to the frataxin family.

Involved in iron-sulfur (Fe-S) cluster assembly. May act as a regulator of Fe-S biogenesis. This chain is Iron-sulfur cluster assembly protein CyaY, found in Dechloromonas aromatica (strain RCB).